The primary structure comprises 714 residues: ATP-dependent RNA helicase MSS116, mitochondrial (714 aa).

A mitochondrion-targeting transit peptide spans 1-37; sequence MSWVRSVAIRTALCRQVRSRYQSYGSTRLFSSSLRSW. The Q motif signature appears at 74–102; that stretch reads SLEASRKFDKSIFRGLYNSKMKNMTVVQQ. Residues 106-296 form the Helicase ATP-binding domain; the sequence is MPMMDTKTGV…HETIGKEYEY (191 aa). Residue 119–126 coordinates ATP; sequence AKTGTGKT. A DEAD box motif is present at residues 234–237; it reads DEAD. A Helicase C-terminal domain is found at 335–498; that stretch reads HINDKYFKAI…TSPDHFQRLG (164 aa). Residues 581–714 are disordered; the sequence is SSNDRKSKRT…TYGRRDDSDE (134 aa). Basic and acidic residues-rich tracts occupy residues 619–640, 656–671, and 679–697; these read RSFD…DRKS, YGDK…DKSY, and SNDR…EKRN.

The protein belongs to the DEAD box helicase family. DDX18/HAS1 subfamily.

The protein localises to the mitochondrion matrix. It catalyses the reaction ATP + H2O = ADP + phosphate + H(+). In terms of biological role, ATP-dependent RNA helicase required for mitochondrial splicing of group I and II introns. Also required for efficient mitochondrial translation. This is ATP-dependent RNA helicase MSS116, mitochondrial (MSS116) from Meyerozyma guilliermondii (strain ATCC 6260 / CBS 566 / DSM 6381 / JCM 1539 / NBRC 10279 / NRRL Y-324) (Yeast).